The chain runs to 156 residues: ATP synthase subunit b (156 aa).

The helical transmembrane segment at 4 to 26 (GATFWGPMISFALFVWFTMKFVW) threads the bilayer.

This sequence belongs to the ATPase B chain family. In terms of assembly, F-type ATPases have 2 components, F(1) - the catalytic core - and F(0) - the membrane proton channel. F(1) has five subunits: alpha(3), beta(3), gamma(1), delta(1), epsilon(1). F(0) has three main subunits: a(1), b(2) and c(10-14). The alpha and beta chains form an alternating ring which encloses part of the gamma chain. F(1) is attached to F(0) by a central stalk formed by the gamma and epsilon chains, while a peripheral stalk is formed by the delta and b chains.

It is found in the cell inner membrane. Functionally, f(1)F(0) ATP synthase produces ATP from ADP in the presence of a proton or sodium gradient. F-type ATPases consist of two structural domains, F(1) containing the extramembraneous catalytic core and F(0) containing the membrane proton channel, linked together by a central stalk and a peripheral stalk. During catalysis, ATP synthesis in the catalytic domain of F(1) is coupled via a rotary mechanism of the central stalk subunits to proton translocation. In terms of biological role, component of the F(0) channel, it forms part of the peripheral stalk, linking F(1) to F(0). The sequence is that of ATP synthase subunit b from Halorhodospira halophila (strain DSM 244 / SL1) (Ectothiorhodospira halophila (strain DSM 244 / SL1)).